We begin with the raw amino-acid sequence, 192 residues long: Protein GrpE (192 aa).

Residues 1-43 (MQENKQPSEIQGELPQPPDGESVPPQPTNEQAPPDTDTMPRIE) are disordered.

Belongs to the GrpE family. As to quaternary structure, homodimer.

The protein resides in the cytoplasm. Participates actively in the response to hyperosmotic and heat shock by preventing the aggregation of stress-denatured proteins, in association with DnaK and GrpE. It is the nucleotide exchange factor for DnaK and may function as a thermosensor. Unfolded proteins bind initially to DnaJ; upon interaction with the DnaJ-bound protein, DnaK hydrolyzes its bound ATP, resulting in the formation of a stable complex. GrpE releases ADP from DnaK; ATP binding to DnaK triggers the release of the substrate protein, thus completing the reaction cycle. Several rounds of ATP-dependent interactions between DnaJ, DnaK and GrpE are required for fully efficient folding. The polypeptide is Protein GrpE (Aromatoleum aromaticum (strain DSM 19018 / LMG 30748 / EbN1) (Azoarcus sp. (strain EbN1))).